Here is a 509-residue protein sequence, read N- to C-terminus: Oligo-1,6-glucosidase (509 aa).

Residue D198 is the Nucleophile of the active site. E254 functions as the Proton donor in the catalytic mechanism.

The protein belongs to the glycosyl hydrolase 13 family.

Its subcellular location is the cytoplasm. It carries out the reaction Hydrolysis of (1-&gt;6)-alpha-D-glucosidic linkages in some oligosaccharides produced from starch and glycogen by alpha-amylase, and in isomaltose.. The protein is Oligo-1,6-glucosidase (malL) of Bacillus sp. (strain F5).